We begin with the raw amino-acid sequence, 121 residues long: Large ribosomal subunit protein uL22 (121 aa).

This sequence belongs to the universal ribosomal protein uL22 family. As to quaternary structure, part of the 50S ribosomal subunit.

This protein binds specifically to 23S rRNA; its binding is stimulated by other ribosomal proteins, e.g. L4, L17, and L20. It is important during the early stages of 50S assembly. It makes multiple contacts with different domains of the 23S rRNA in the assembled 50S subunit and ribosome. Functionally, the globular domain of the protein is located near the polypeptide exit tunnel on the outside of the subunit, while an extended beta-hairpin is found that lines the wall of the exit tunnel in the center of the 70S ribosome. This Synechococcus sp. (strain WH7803) protein is Large ribosomal subunit protein uL22.